We begin with the raw amino-acid sequence, 1036 residues long: Serine/threonine-protein kinase ULK2 (1036 aa).

In terms of domain architecture, Protein kinase spans 9–271; that stretch reads YSKRDLVGHG…FEAFFSHPFL (263 aa). Residues 15 to 23 and Lys39 each bind ATP; that span reads VGHGAFAVV. Catalysis depends on Asp131, which acts as the Proton acceptor. Disordered regions lie at residues 319–348, 418–460, 491–522, 540–588, and 656–695; these read ENLSSPPLGPPNYLQVSKDSASTSSKNSSC, TSTA…ADTA, CCCGHPQGHDSRSRNSSGSPVPQAQSPQSLLS, QKLR…SSDW, and AEQQSKAVFGRSVSTGKLSDQQGKTPICRHQGSTDSLNTE. A compositionally biased stretch (low complexity) spans 335–348; the sequence is SKDSASTSSKNSSC. Polar residues predominate over residues 418–428; it reads TSTASSGTNVH. Residue Ser430 is modified to Phosphoserine. Over residues 504-521 the composition is skewed to polar residues; it reads RNSSGSPVPQAQSPQSLL. A compositionally biased stretch (polar residues) spans 659 to 679; that stretch reads QSKAVFGRSVSTGKLSDQQGK. Phosphoserine is present on residues Ser771 and Ser780. Positions 812–1036 are CTD-like region; sequence ELPEETLMER…SALCHSTATV (225 aa).

The protein belongs to the protein kinase superfamily. Ser/Thr protein kinase family. APG1/unc-51/ULK1 subfamily. As to quaternary structure, interacts with SYNGAP1. Component of a complex consisting of ATG13/KIAA0652, ULK1 and RB1CC1/FIP200. Interacts (via C-terminus) with ATG13/KIAA0652. Associates with the mammalian target of rapamycin complex 1 (mTORC1) through an interaction with RPTOR. Post-translationally, autophosphorylated. In response to nutrient limitation, probably phosphorylated and activated by AMPK, leading to activate autophagy.

Its subcellular location is the cytoplasmic vesicle membrane. It catalyses the reaction L-seryl-[protein] + ATP = O-phospho-L-seryl-[protein] + ADP + H(+). The enzyme catalyses L-threonyl-[protein] + ATP = O-phospho-L-threonyl-[protein] + ADP + H(+). Functionally, serine/threonine-protein kinase involved in autophagy in response to starvation. Acts upstream of phosphatidylinositol 3-kinase PIK3C3 to regulate the formation of autophagophores, the precursors of autophagosomes. Part of regulatory feedback loops in autophagy: acts both as a downstream effector and a negative regulator of mammalian target of rapamycin complex 1 (mTORC1) via interaction with RPTOR. Activated via phosphorylation by AMPK, also acts as a negative regulator of AMPK through phosphorylation of the AMPK subunits PRKAA1, PRKAB2 and PRKAG1. May phosphorylate ATG13/KIAA0652, FRS2, FRS3 and RPTOR; however such data need additional evidences. Not involved in ammonia-induced autophagy or in autophagic response of cerebellar granule neurons (CGN) to low potassium concentration. Plays a role early in neuronal differentiation and is required for granule cell axon formation: may govern axon formation via Ras-like GTPase signaling and through regulation of the Rab5-mediated endocytic pathways within developing axons. This chain is Serine/threonine-protein kinase ULK2 (ULK2), found in Homo sapiens (Human).